A 316-amino-acid chain; its full sequence is Metal tolerance protein 8 (316 aa).

The Cytoplasmic segment spans residues 1–15 (MGPVRHILNERKSRK). A helical membrane pass occupies residues 16 to 36 (IAAFLLINTAYMFVEFTSGFM). The Vacuolar portion of the chain corresponds to 37–45 (SDSLGLISD). The helical transmembrane segment at 46–66 (ACHMLFDCAALAIGLYASYIA) threads the bilayer. The Cytoplasmic segment spans residues 67–80 (RLPANGLYNYGRGR). The chain crosses the membrane as a helical span at residues 81-101 (FEVLSGYVNAVFLVLVGALIV). Over 102 to 116 (LESFERILEPREIST) the chain is Vacuolar. Residues 117–137 (SSLLTVSIGGLVVNVIGLVFF) traverse the membrane as a helical segment. Residues 138 to 176 (HEEHHHAHGEAHSCNGGLQSSENHNKSRNRHHIDHNMEG) are Cytoplasmic-facing. The disordered stretch occupies residues 147–166 (EAHSCNGGLQSSENHNKSRN). A helical membrane pass occupies residues 177–197 (IFLHVLADTMGSVGVVISTLL). Topologically, residues 198–202 (IKYKG) are vacuolar. A helical membrane pass occupies residues 203–223 (WLIADPICSVFISIMIVSSVL). Topologically, residues 224-316 (PLLRNSAEIL…LTIQIECVKR (93 aa)) are cytoplasmic.

This sequence belongs to the cation diffusion facilitator (CDF) transporter (TC 2.A.4) family. SLC30A subfamily.

It localises to the vacuole membrane. In terms of biological role, involved in sequestration of excess metal in the cytoplasm into vacuoles to maintain metal homeostasis. This is Metal tolerance protein 8 (MTP8) from Oryza sativa subsp. japonica (Rice).